The primary structure comprises 683 residues: Glucosylceramidase (683 aa).

The active-site Proton donor is Glu-254. Residue Glu-483 is the Nucleophile of the active site.

This sequence belongs to the glycosyl hydrolase 5 (cellulase A) family.

The protein resides in the membrane. The enzyme catalyses a beta-D-glucosyl-(1&lt;-&gt;1')-N-acylsphing-4-enine + H2O = an N-acylsphing-4-enine + D-glucose. With respect to regulation, inhibited by metal cations Co(2+), Cu(2+), Ni(2+), Pb(2+) and Zn(2+). Not inhibited by metal chelator ethylenediaminetetraacetic acid (EDTA). Functionally, specifically hydrolyzes the glucosidic linkage in glucosylceramide. May prevent accumulation of aberrent glucosylceramide containing immature ceramide. The chain is Glucosylceramidase from Rhizopus delemar (strain RA 99-880 / ATCC MYA-4621 / FGSC 9543 / NRRL 43880) (Mucormycosis agent).